The primary structure comprises 541 residues: Membrane protein insertase YidC (541 aa).

The next 6 helical transmembrane spans lie at 6–26, 325–345, 349–369, 420–440, 457–477, and 500–520; these read NILLIGLLFVSFLLWQQWQAD, LVVDYGFLWWLAVPIHWLLMF, FVGNWGLAIILITLTVRGLLF, GGCLPIILQMPIFIALYWVLL, LSVQDPYYILPLLMGVSMFVM, and VIFTVFFLWFPAGLVLYWLVG.

It belongs to the OXA1/ALB3/YidC family. Type 1 subfamily. In terms of assembly, interacts with the Sec translocase complex via SecD. Specifically interacts with transmembrane segments of nascent integral membrane proteins during membrane integration.

The protein localises to the cell inner membrane. Its function is as follows. Required for the insertion and/or proper folding and/or complex formation of integral membrane proteins into the membrane. Involved in integration of membrane proteins that insert both dependently and independently of the Sec translocase complex, as well as at least some lipoproteins. Aids folding of multispanning membrane proteins. The sequence is that of Membrane protein insertase YidC from Shewanella baltica (strain OS195).